The following is a 797-amino-acid chain: Hid-1 family protein P27G11.12 (797 aa).

Belongs to the hid-1 family.

Its subcellular location is the cytoplasm. The protein resides in the nucleus. The protein is Hid-1 family protein P27G11.12 of Schizosaccharomyces pombe (strain 972 / ATCC 24843) (Fission yeast).